Consider the following 506-residue polypeptide: GTPase Der (506 aa).

EngA-type G domains follow at residues 3–166 and 218–391; these read PVVA…GEQL and IKIA…ACAT. GTP is bound by residues 9–16, 56–60, 118–121, 224–231, 271–275, and 336–339; these read GRPNVGKS, DTGGI, NKTD, DTAGV, and NKWD. One can recognise a KH-like domain in the interval 392 to 476; sequence QKTSTSMLTR…PIRIQFQEGN (85 aa).

It belongs to the TRAFAC class TrmE-Era-EngA-EngB-Septin-like GTPase superfamily. EngA (Der) GTPase family. As to quaternary structure, associates with the 50S ribosomal subunit.

In terms of biological role, GTPase that plays an essential role in the late steps of ribosome biogenesis. In Actinobacillus pleuropneumoniae serotype 3 (strain JL03), this protein is GTPase Der.